The chain runs to 61 residues: Metallothionein-2 (61 aa).

N-acetylmethionine is present on methionine 1. Positions 1-29 are beta; sequence MDPNCSCATDGSCSCAGSCKCKQCKCTSC. Cysteine 5, cysteine 7, cysteine 13, cysteine 15, cysteine 19, cysteine 21, cysteine 24, cysteine 26, cysteine 29, cysteine 33, cysteine 34, cysteine 36, cysteine 37, cysteine 41, cysteine 44, cysteine 48, cysteine 50, and cysteine 57 together coordinate a divalent metal cation. The interval 30–61 is alpha; that stretch reads KKSCCSCCPVGCAKCSQGCICKEASDKCSCCA. Serine 58 bears the Phosphoserine mark. Residues cysteine 59 and cysteine 60 each contribute to the a divalent metal cation site.

It belongs to the metallothionein superfamily. Type 1 family.

Functionally, metallothioneins have a high content of cysteine residues that bind various heavy metals; these proteins are transcriptionally regulated by both heavy metals and glucocorticoids. This Rattus norvegicus (Rat) protein is Metallothionein-2 (Mt2).